Reading from the N-terminus, the 486-residue chain is Probable transporter MCH1 (486 aa).

The Cytoplasmic portion of the chain corresponds to 1–29 (MPLSKVEHYLSYHTRLLLPHVLSLQSSHR). The chain crosses the membrane as a helical span at residues 30 to 50 (VAYIFSLLSAVSTGFITLISL). The Vacuolar portion of the chain corresponds to 51 to 67 (YSQPWQKHLNYSSWQIN). The N-linked (GlcNAc...) asparagine glycan is linked to Asn60. Residues 68–88 (TIASMTNLGMYLTPPILGMIA) traverse the membrane as a helical segment. Residues 89-93 (DSHGP) are Cytoplasmic-facing. A helical transmembrane segment spans residues 94-114 (ITLSLLAIIGFIPSYSYLAYV). Residues 115–133 (FNHPELSLGGNGDSSFNLS) are Vacuolar-facing. The N-linked (GlcNAc...) asparagine glycan is linked to Asn131. The helical transmembrane segment at 134 to 154 (IICFVFIGISTSALYFSALLT) threads the bilayer. At 155–163 (CTKLYPHTK) the chain is on the cytoplasmic side. A helical membrane pass occupies residues 164-184 (LLSISLPTTCYGISSVVGSQL). The Vacuolar segment spans residues 185 to 212 (LRIKWFWSSNASSSSSNSDLNLGRVFQT). Residue Asn194 is glycosylated (N-linked (GlcNAc...) asparagine). Residues 213–233 (FALVYVVIGLLAWIATSVVSL) form a helical membrane-spanning segment. Topologically, residues 234-279 (LHFNEEQDNQKRLDDQTDVEQSPLLERSNHVQEKFTQTMLRIFSDP) are cytoplasmic. Residue Ser255 is modified to Phosphoserine. A helical membrane pass occupies residues 280–300 (VTYILAVSILLSLGPLEMFIA). Residues 301-320 (NMGSLTNLLVQLDAPTLSTK) lie on the Vacuolar side of the membrane. Residues 321–343 (LLSTYALSSTFTRLLTGIVADFF) form a helical membrane-spanning segment. Residues 344–347 (AKKK) are Cytoplasmic-facing. The chain crosses the membrane as a helical span at residues 348 to 368 (ISIKWILLTFLSLGVCAQLFL). Residues 369–385 (LKMTSSASPWGLVPTGS) lie on the Vacuolar side of the membrane. A helical membrane pass occupies residues 386–406 (LVGIVYGGLFTVYPTLVLLVW). Over 407 to 413 (GERSFGT) the chain is Cytoplasmic. Residues 414 to 434 (VYGSLLIAPAIGSMIFCMLYA) traverse the membrane as a helical segment. The Vacuolar segment spans residues 435–456 (KFYDSRCMSGGGDLRNPSCISA). Residues 457–477 (VYKYSSIAFVVSAVLSAVVFW) form a helical membrane-spanning segment. At 478 to 486 (KLKSRKLRI) the chain is on the cytoplasmic side.

Belongs to the major facilitator superfamily.

Its subcellular location is the vacuole membrane. Its function is as follows. Probable transporter. Does not act in the transport of monocarboxylic acids across the plasma membrane. This chain is Probable transporter MCH1 (MCH1), found in Saccharomyces cerevisiae (strain ATCC 204508 / S288c) (Baker's yeast).